Here is an 887-residue protein sequence, read N- to C-terminus: Translation initiation factor IF-2 (887 aa).

The interval 1–291 is disordered; the sequence is MTDQADTSER…RRRVERERKK (291 aa). Positions 58–117 are enriched in low complexity; that stretch reads AAPAAAPAAAPAAAEEVAKKPVAAPEVKPAAPVEERPAPVAKAAPEVKAVPAPAPAAAPA. Basic and acidic residues-rich tracts occupy residues 148–178, 185–194, 201–215, and 267–276; these read SARE…EAER, AAEEASRHTA, RAAE…DDRP, and AFDDESERQR. In terms of domain architecture, tr-type G spans 385–553; it reads ARAPVVTVMG…TILLQAELLD (169 aa). The segment at 394–401 is G1; sequence GHVDHGKT. Residue 394–401 coordinates GTP; that stretch reads GHVDHGKT. The segment at 419–423 is G2; it reads GITQH. A G3 region spans residues 441–444; the sequence is DTPG. GTP contacts are provided by residues 441-445 and 495-498; these read DTPGH and NKMD. The tract at residues 495–498 is G4; it reads NKMD. Residues 531-533 form a G5 region; it reads SAK.

It belongs to the TRAFAC class translation factor GTPase superfamily. Classic translation factor GTPase family. IF-2 subfamily.

The protein localises to the cytoplasm. Functionally, one of the essential components for the initiation of protein synthesis. Protects formylmethionyl-tRNA from spontaneous hydrolysis and promotes its binding to the 30S ribosomal subunits. Also involved in the hydrolysis of GTP during the formation of the 70S ribosomal complex. In Parvibaculum lavamentivorans (strain DS-1 / DSM 13023 / NCIMB 13966), this protein is Translation initiation factor IF-2.